The following is a 126-amino-acid chain: MAREFKRSDRVAQEIQKEVAVILQREVKDPRIGMVTVSDVEISSDLAYAKIFVTFLFDQDENVIEQGMKGLEKASPYIRSLLGKVMRLRIVPELRFIYDQSLVDGMRMSNLVTNVVREDEKRHVEE.

This sequence belongs to the RbfA family. In terms of assembly, monomer. Binds 30S ribosomal subunits, but not 50S ribosomal subunits or 70S ribosomes.

The protein localises to the cytoplasm. In terms of biological role, one of several proteins that assist in the late maturation steps of the functional core of the 30S ribosomal subunit. Associates with free 30S ribosomal subunits (but not with 30S subunits that are part of 70S ribosomes or polysomes). Required for efficient processing of 16S rRNA. May interact with the 5'-terminal helix region of 16S rRNA. The sequence is that of Ribosome-binding factor A from Histophilus somni (strain 129Pt) (Haemophilus somnus).